The chain runs to 209 residues: B3 domain-containing protein At2g31420 (209 aa).

Positions 101–198 (LSKLEKSDFL…KLCFALSSPT (98 aa)) form a DNA-binding region, TF-B3.

It is found in the nucleus. In Arabidopsis thaliana (Mouse-ear cress), this protein is B3 domain-containing protein At2g31420.